The sequence spans 504 residues: SPbeta prophage-derived uncharacterized protein YorI (504 aa).

This chain is SPbeta prophage-derived uncharacterized protein YorI (yorI), found in Bacillus subtilis (strain 168).